Here is a 416-residue protein sequence, read N- to C-terminus: MAVFTPPSGNSNSTDHTHTQDDHDKDDNDIKKFYIRPSLGLKLWGPLVPAPDNLPGLYTLITIQSAVGFFALWRLRRLYKLPPPRRIATGTHSDLSFGELPSEMIVNGKTKIKKDIADFPTLNRFSTTHGDIVLAPPPIIPRQSRFVSVRKLLWGLFGSLLLSQSLLELTRLNFLKYDPWCDEMKSVRDKKFFNNIVKYYHEGIDPTKIKVKDAMNGTPLSTNIPEVKQSVALARAQVEAQNPIIKWFGPLEYKPMSFNEYLNRMEFHLDMFEFFQNKRNIRENSIELINSISHNPQSSSTGLEGLSESKKLHLQNVEKRLHFLASSGDSISAPVKRSSTTLSRGVILPHDTKGPQDIDLDTIRSLYDPWMTLALETSLSIKFIPTTMPSHTKTPTSTDQPLPGPTPKALTNEKTH.

Residues methionine 1 to asparagine 28 are disordered. At methionine 1 to glycine 56 the chain is on the mitochondrial intermembrane side. The segment covering aspartate 15–asparagine 28 has biased composition (basic and acidic residues). The helical transmembrane segment at leucine 57–tryptophan 73 threads the bilayer. Residues arginine 74 to lysine 151 lie on the Mitochondrial matrix side of the membrane. Residues leucine 152 to leucine 169 form a helical membrane-spanning segment. Topologically, residues threonine 170 to histidine 416 are mitochondrial intermembrane. Residues serine 390–glutamine 400 show a composition bias toward polar residues. Residues serine 390–histidine 416 are disordered.

The protein belongs to the MGR1 family. As to quaternary structure, component of the mitochondrial inner membrane i-AAA protease complex composed of at least MRG1 and YME1. Interacts directly with YME1.

It is found in the mitochondrion inner membrane. Its function is as follows. Component of the mitochondrial inner membrane i-AAA protease complex required for mitochondrial inner membrane protein turnover. Required for growth of cells lacking the mitochondrial genome. The chain is Mitochondrial inner membrane i-AAA protease complex subunit MGR1 (MGR1) from Saccharomyces cerevisiae (strain YJM789) (Baker's yeast).